A 197-amino-acid chain; its full sequence is Guanylate kinase (197 aa).

One can recognise a Guanylate kinase-like domain in the interval 6–191 (SKLIILSGPS…CVAQIEKIIS (186 aa)). Residue 13–20 (GPSGVGKG) coordinates ATP.

This sequence belongs to the guanylate kinase family.

The protein localises to the cytoplasm. The catalysed reaction is GMP + ATP = GDP + ADP. Essential for recycling GMP and indirectly, cGMP. In Mesomycoplasma hyopneumoniae (strain 232) (Mycoplasma hyopneumoniae), this protein is Guanylate kinase.